The chain runs to 266 residues: Imidazole glycerol phosphate synthase subunit HisF (266 aa).

Residues Asp11 and Asp130 contribute to the active site. Positions Arg134–Ser157 are disordered.

The protein belongs to the HisA/HisF family. Heterodimer of HisH and HisF.

Its subcellular location is the cytoplasm. The enzyme catalyses 5-[(5-phospho-1-deoxy-D-ribulos-1-ylimino)methylamino]-1-(5-phospho-beta-D-ribosyl)imidazole-4-carboxamide + L-glutamine = D-erythro-1-(imidazol-4-yl)glycerol 3-phosphate + 5-amino-1-(5-phospho-beta-D-ribosyl)imidazole-4-carboxamide + L-glutamate + H(+). Its pathway is amino-acid biosynthesis; L-histidine biosynthesis; L-histidine from 5-phospho-alpha-D-ribose 1-diphosphate: step 5/9. Its function is as follows. IGPS catalyzes the conversion of PRFAR and glutamine to IGP, AICAR and glutamate. The HisF subunit catalyzes the cyclization activity that produces IGP and AICAR from PRFAR using the ammonia provided by the HisH subunit. This Paracidovorax citrulli (strain AAC00-1) (Acidovorax citrulli) protein is Imidazole glycerol phosphate synthase subunit HisF.